Reading from the N-terminus, the 257-residue chain is Diaminopimelate epimerase (257 aa).

Positions 13, 46, and 66 each coordinate substrate. The Proton donor role is filled by Cys-75. Residues 76-77, Asn-145, Asn-175, and 193-194 contribute to the substrate site; these read GN and ER. The active-site Proton acceptor is Cys-202. Position 203–204 (203–204) interacts with substrate; that stretch reads GS.

It belongs to the diaminopimelate epimerase family. Homodimer.

The protein localises to the cytoplasm. The catalysed reaction is (2S,6S)-2,6-diaminopimelate = meso-2,6-diaminopimelate. It participates in amino-acid biosynthesis; L-lysine biosynthesis via DAP pathway; DL-2,6-diaminopimelate from LL-2,6-diaminopimelate: step 1/1. Its function is as follows. Catalyzes the stereoinversion of LL-2,6-diaminopimelate (L,L-DAP) to meso-diaminopimelate (meso-DAP), a precursor of L-lysine and an essential component of the bacterial peptidoglycan. The chain is Diaminopimelate epimerase from Gluconobacter oxydans (strain 621H) (Gluconobacter suboxydans).